Here is a 165-residue protein sequence, read N- to C-terminus: AIG2-like protein A (165 aa).

Substrate is bound at residue 15 to 20; the sequence is YGSFQD. Residue Glu83 is the Proton acceptor of the active site.

The protein belongs to the gamma-glutamylcyclotransferase family. As to expression, expressed only in seeds.

Putative gamma-glutamylcyclotransferase. This chain is AIG2-like protein A, found in Arabidopsis thaliana (Mouse-ear cress).